We begin with the raw amino-acid sequence, 358 residues long: Probable aminomethyltransferase (358 aa).

This sequence belongs to the GcvT family. In terms of assembly, the glycine cleavage system is composed of four proteins: P, T, L and H.

It catalyses the reaction N(6)-[(R)-S(8)-aminomethyldihydrolipoyl]-L-lysyl-[protein] + (6S)-5,6,7,8-tetrahydrofolate = N(6)-[(R)-dihydrolipoyl]-L-lysyl-[protein] + (6R)-5,10-methylene-5,6,7,8-tetrahydrofolate + NH4(+). In terms of biological role, the glycine cleavage system catalyzes the degradation of glycine. The protein is Probable aminomethyltransferase of Natronomonas pharaonis (strain ATCC 35678 / DSM 2160 / CIP 103997 / JCM 8858 / NBRC 14720 / NCIMB 2260 / Gabara) (Halobacterium pharaonis).